A 658-amino-acid chain; its full sequence is Biosynthetic arginine decarboxylase (658 aa).

Position 127 is an N6-(pyridoxal phosphate)lysine (Lys127). 307–317 lines the substrate pocket; sequence FDVGGGLGVDY.

This sequence belongs to the Orn/Lys/Arg decarboxylase class-II family. SpeA subfamily. Homotetramer. Requires Mg(2+) as cofactor. The cofactor is pyridoxal 5'-phosphate.

The protein localises to the periplasm. The catalysed reaction is L-arginine + H(+) = agmatine + CO2. It functions in the pathway amine and polyamine biosynthesis; agmatine biosynthesis; agmatine from L-arginine: step 1/1. Catalyzes the biosynthesis of agmatine from arginine. This Escherichia coli O157:H7 protein is Biosynthetic arginine decarboxylase (speA).